The primary structure comprises 167 residues: Lipoprotein signal peptidase (167 aa).

3 consecutive transmembrane segments (helical) span residues 9-29 (AWLY…TKNL), 68-88 (LPLL…YALY), and 98-118 (MGLI…LGMV). Residues Asp120 and Asp138 contribute to the active site. Residues 130–150 (YWPAFNIADASISIGIALLIL) form a helical membrane-spanning segment.

The protein belongs to the peptidase A8 family.

The protein localises to the cell inner membrane. It catalyses the reaction Release of signal peptides from bacterial membrane prolipoproteins. Hydrolyzes -Xaa-Yaa-Zaa-|-(S,diacylglyceryl)Cys-, in which Xaa is hydrophobic (preferably Leu), and Yaa (Ala or Ser) and Zaa (Gly or Ala) have small, neutral side chains.. It functions in the pathway protein modification; lipoprotein biosynthesis (signal peptide cleavage). Its function is as follows. This protein specifically catalyzes the removal of signal peptides from prolipoproteins. The protein is Lipoprotein signal peptidase of Aquifex aeolicus (strain VF5).